The primary structure comprises 471 residues: Bifunctional protein GlmU (471 aa).

The tract at residues methionine 1–arginine 232 is pyrophosphorylase. Residues leucine 9–glycine 12, lysine 23, glutamine 73, glycine 78–threonine 79, tyrosine 102–aspartate 104, glycine 141, glutamate 157, and asparagine 230 contribute to the UDP-N-acetyl-alpha-D-glucosamine site. Position 104 (aspartate 104) interacts with Mg(2+). Asparagine 230 is a Mg(2+) binding site. Positions valine 233–asparagine 253 are linker. An N-acetyltransferase region spans residues glycine 254–threonine 471. The UDP-N-acetyl-alpha-D-glucosamine site is built by arginine 335 and lysine 353. Histidine 365 acts as the Proton acceptor in catalysis. Residues tyrosine 368 and asparagine 379 each contribute to the UDP-N-acetyl-alpha-D-glucosamine site. Residues alanine 382, asparagine 388–tyrosine 389, alanine 425, and arginine 444 contribute to the acetyl-CoA site.

It in the N-terminal section; belongs to the N-acetylglucosamine-1-phosphate uridyltransferase family. This sequence in the C-terminal section; belongs to the transferase hexapeptide repeat family. In terms of assembly, homotrimer. It depends on Mg(2+) as a cofactor.

Its subcellular location is the cytoplasm. The catalysed reaction is alpha-D-glucosamine 1-phosphate + acetyl-CoA = N-acetyl-alpha-D-glucosamine 1-phosphate + CoA + H(+). It carries out the reaction N-acetyl-alpha-D-glucosamine 1-phosphate + UTP + H(+) = UDP-N-acetyl-alpha-D-glucosamine + diphosphate. Its pathway is nucleotide-sugar biosynthesis; UDP-N-acetyl-alpha-D-glucosamine biosynthesis; N-acetyl-alpha-D-glucosamine 1-phosphate from alpha-D-glucosamine 6-phosphate (route II): step 2/2. The protein operates within nucleotide-sugar biosynthesis; UDP-N-acetyl-alpha-D-glucosamine biosynthesis; UDP-N-acetyl-alpha-D-glucosamine from N-acetyl-alpha-D-glucosamine 1-phosphate: step 1/1. It functions in the pathway bacterial outer membrane biogenesis; LPS lipid A biosynthesis. Functionally, catalyzes the last two sequential reactions in the de novo biosynthetic pathway for UDP-N-acetylglucosamine (UDP-GlcNAc). The C-terminal domain catalyzes the transfer of acetyl group from acetyl coenzyme A to glucosamine-1-phosphate (GlcN-1-P) to produce N-acetylglucosamine-1-phosphate (GlcNAc-1-P), which is converted into UDP-GlcNAc by the transfer of uridine 5-monophosphate (from uridine 5-triphosphate), a reaction catalyzed by the N-terminal domain. This chain is Bifunctional protein GlmU, found in Symbiobacterium thermophilum (strain DSM 24528 / JCM 14929 / IAM 14863 / T).